The chain runs to 187 residues: uncharacterized protein (187 aa).

Residues 8 to 28 form a helical membrane-spanning segment; sequence FFILLAINFILAAGFVALVLL.

It is found in the membrane. This is an uncharacterized protein from Bacillus subtilis (strain 168).